The sequence spans 40 residues: uncharacterized protein (40 aa).

This is an uncharacterized protein from Streptomyces peucetius.